We begin with the raw amino-acid sequence, 62 residues long: Flavodoxin (62 aa).

One can recognise a Flavodoxin-like domain in the interval 4–62; it reads IGIFFGTDTGKTRKIAKMIHKQLGELADAPVNINRTTLDDFMAYPVLLLGTPTLGDGQL.

It belongs to the flavodoxin family. It depends on FMN as a cofactor.

In terms of biological role, low-potential electron donor to a number of redox enzymes. NifF is the electron donor to nitrogenase. This chain is Flavodoxin (nifF), found in Klebsiella oxytoca.